Reading from the N-terminus, the 154-residue chain is Endoribonuclease YbeY (154 aa).

The Zn(2+) site is built by histidine 113, histidine 117, and histidine 123.

The protein belongs to the endoribonuclease YbeY family. Requires Zn(2+) as cofactor.

It is found in the cytoplasm. In terms of biological role, single strand-specific metallo-endoribonuclease involved in late-stage 70S ribosome quality control and in maturation of the 3' terminus of the 16S rRNA. The chain is Endoribonuclease YbeY from Anaplasma marginale (strain Florida).